We begin with the raw amino-acid sequence, 310 residues long: ADP-L-glycero-D-manno-heptose-6-epimerase (310 aa).

NADP(+) contacts are provided by residues 10–11 (FI), 31–32 (DN), Lys-38, Lys-53, 75–79 (EGACS), and Asn-92. Tyr-140 functions as the Proton acceptor in the catalytic mechanism. Position 144 (Lys-144) interacts with NADP(+). Asn-169 lines the substrate pocket. NADP(+)-binding residues include Val-170 and Lys-178. Lys-178 (proton acceptor) is an active-site residue. Substrate-binding positions include Ser-180, His-187, 201-204 (FEGS), and Arg-209. Lys-267 carries the N6-acetyllysine modification. Substrate is bound at residue Tyr-272.

Belongs to the NAD(P)-dependent epimerase/dehydratase family. HldD subfamily. Homopentamer. NADP(+) serves as cofactor. It depends on NAD(+) as a cofactor.

The enzyme catalyses ADP-D-glycero-beta-D-manno-heptose = ADP-L-glycero-beta-D-manno-heptose. Its pathway is nucleotide-sugar biosynthesis; ADP-L-glycero-beta-D-manno-heptose biosynthesis; ADP-L-glycero-beta-D-manno-heptose from D-glycero-beta-D-manno-heptose 7-phosphate: step 4/4. The protein operates within bacterial outer membrane biogenesis; LPS core biosynthesis. Its activity is regulated as follows. Completely inhibited by ADP and ADP-glucose, and partially inhibited by ATP and NADH. Functionally, catalyzes the interconversion between ADP-D-glycero-beta-D-manno-heptose and ADP-L-glycero-beta-D-manno-heptose via an epimerization at carbon 6 of the heptose. This Escherichia coli (strain K12) protein is ADP-L-glycero-D-manno-heptose-6-epimerase (hldD).